We begin with the raw amino-acid sequence, 217 residues long: MTTGADADLIERGRKLFAGDWQFIWASPSIETLPPMAGVEVAFAGRSNVGKSSLINALTGRGTLARTSRTPGRTQELIFFEGPKDADVRLVDMPGYGFASAPKARIASWTSLIHKFLLGRASLARVYVLIDSRHGIKDIDQAILTTLDRSAVSYQIVLTKADEVKATEMAERTEATRTLLAKHPAAFPDVLVTSSRTGYGVPELRAAMARLIGEHQR.

The EngB-type G domain maps to 37 to 214; sequence AGVEVAFAGR…RAAMARLIGE (178 aa). Residues 45–52, 72–76, 92–95, 159–162, and 193–195 each bind GTP; these read GRSNVGKS, GRTQE, DMPG, TKAD, and TSS. Positions 52 and 74 each coordinate Mg(2+).

It belongs to the TRAFAC class TrmE-Era-EngA-EngB-Septin-like GTPase superfamily. EngB GTPase family. Mg(2+) serves as cofactor.

Functionally, necessary for normal cell division and for the maintenance of normal septation. This Nitrobacter hamburgensis (strain DSM 10229 / NCIMB 13809 / X14) protein is Probable GTP-binding protein EngB.